Here is a 161-residue protein sequence, read N- to C-terminus: FAD synthase (161 aa).

Residues 19–20 (TF), 24–27 (HPGH), Asp-106, and Tyr-133 each bind ATP.

It belongs to the archaeal FAD synthase family. As to quaternary structure, homodimer. It depends on a divalent metal cation as a cofactor.

It carries out the reaction FMN + ATP + H(+) = FAD + diphosphate. It participates in cofactor biosynthesis; FAD biosynthesis; FAD from FMN: step 1/1. Catalyzes the transfer of the AMP portion of ATP to flavin mononucleotide (FMN) to produce flavin adenine dinucleotide (FAD) coenzyme. This is FAD synthase from Methanothermobacter marburgensis (strain ATCC BAA-927 / DSM 2133 / JCM 14651 / NBRC 100331 / OCM 82 / Marburg) (Methanobacterium thermoautotrophicum).